We begin with the raw amino-acid sequence, 160 residues long: Aspartate 1-decarboxylase 2 (160 aa).

Serine 25 functions as the Schiff-base intermediate with substrate; via pyruvic acid in the catalytic mechanism. Position 25 is a pyruvic acid (Ser) (serine 25). A substrate-binding site is contributed by threonine 57. Tyrosine 58 acts as the Proton donor in catalysis. 73–75 (GAA) contacts substrate.

The protein belongs to the PanD family. In terms of assembly, heterooctamer of four alpha and four beta subunits. Pyruvate is required as a cofactor. Post-translationally, is synthesized initially as an inactive proenzyme, which is activated by self-cleavage at a specific serine bond to produce a beta-subunit with a hydroxyl group at its C-terminus and an alpha-subunit with a pyruvoyl group at its N-terminus.

The protein resides in the cytoplasm. The catalysed reaction is L-aspartate + H(+) = beta-alanine + CO2. The protein operates within cofactor biosynthesis; (R)-pantothenate biosynthesis; beta-alanine from L-aspartate: step 1/1. Catalyzes the pyruvoyl-dependent decarboxylation of aspartate to produce beta-alanine. The protein is Aspartate 1-decarboxylase 2 of Frankia casuarinae (strain DSM 45818 / CECT 9043 / HFP020203 / CcI3).